Here is a 360-residue protein sequence, read N- to C-terminus: UDP-N-acetylglucosamine--N-acetylmuramyl-(pentapeptide) pyrophosphoryl-undecaprenol N-acetylglucosamine transferase (360 aa).

UDP-N-acetyl-alpha-D-glucosamine is bound by residues 12–14 (TAG), S198, and Q289.

Belongs to the glycosyltransferase 28 family. MurG subfamily.

The protein resides in the cell membrane. It catalyses the reaction Mur2Ac(oyl-L-Ala-gamma-D-Glu-L-Lys-D-Ala-D-Ala)-di-trans,octa-cis-undecaprenyl diphosphate + UDP-N-acetyl-alpha-D-glucosamine = beta-D-GlcNAc-(1-&gt;4)-Mur2Ac(oyl-L-Ala-gamma-D-Glu-L-Lys-D-Ala-D-Ala)-di-trans,octa-cis-undecaprenyl diphosphate + UDP + H(+). It participates in cell wall biogenesis; peptidoglycan biosynthesis. Cell wall formation. Catalyzes the transfer of a GlcNAc subunit on undecaprenyl-pyrophosphoryl-MurNAc-pentapeptide (lipid intermediate I) to form undecaprenyl-pyrophosphoryl-MurNAc-(pentapeptide)GlcNAc (lipid intermediate II). The sequence is that of UDP-N-acetylglucosamine--N-acetylmuramyl-(pentapeptide) pyrophosphoryl-undecaprenol N-acetylglucosamine transferase from Streptococcus equi subsp. zooepidemicus (strain H70).